The following is a 428-amino-acid chain: Serine--tRNA ligase (428 aa).

231–233 (TAE) provides a ligand contact to L-serine. ATP is bound by residues 262-264 (RRE) and Val278. Glu285 is a binding site for L-serine. 349–352 (EVSS) contacts ATP. Residue Ser384 coordinates L-serine.

Belongs to the class-II aminoacyl-tRNA synthetase family. Type-1 seryl-tRNA synthetase subfamily. As to quaternary structure, homodimer. The tRNA molecule binds across the dimer.

The protein resides in the cytoplasm. The enzyme catalyses tRNA(Ser) + L-serine + ATP = L-seryl-tRNA(Ser) + AMP + diphosphate + H(+). The catalysed reaction is tRNA(Sec) + L-serine + ATP = L-seryl-tRNA(Sec) + AMP + diphosphate + H(+). It functions in the pathway aminoacyl-tRNA biosynthesis; selenocysteinyl-tRNA(Sec) biosynthesis; L-seryl-tRNA(Sec) from L-serine and tRNA(Sec): step 1/1. In terms of biological role, catalyzes the attachment of serine to tRNA(Ser). Is also able to aminoacylate tRNA(Sec) with serine, to form the misacylated tRNA L-seryl-tRNA(Sec), which will be further converted into selenocysteinyl-tRNA(Sec). The protein is Serine--tRNA ligase of Chlamydia trachomatis serovar A (strain ATCC VR-571B / DSM 19440 / HAR-13).